A 1211-amino-acid polypeptide reads, in one-letter code: PH domain-containing protein DDB_G0287875 (1211 aa).

A Ras-associating 1 domain is found at 5–90; it reads QKKILKVFDQ…YKFFFLNPNG (86 aa). Polar residues predominate over residues 103-112; sequence KSQSASTSGS. Residues 103–133 are disordered; that stretch reads KSQSASTSGSAPPKKEPPKPQELQQKQHISK. A PH domain is found at 132-223; it reads SKGKSGWLLR…WAQELQATMN (92 aa). Calponin-homology (CH) domains follow at residues 277–384 and 392–502; these read TTLV…VGYF and FNMR…LSGQ. Disordered regions lie at residues 520–941 and 973–1110; these read VEPE…TESV and TSAT…PKNT. A coiled-coil region spans residues 527-572; the sequence is SIRDKQLKLMREKKEEEDRLKKEKEEKEKEEKEKLEKESSAAAAAT. Positions 528–565 are enriched in basic and acidic residues; that stretch reads IRDKQLKLMREKKEEEDRLKKEKEEKEKEEKEKLEKES. 4 stretches are compositionally biased toward low complexity: residues 566–596, 607–646, 655–668, and 676–691; these read SAAA…PLKK, PPTV…TLTP, KKPA…KPVA, and PSSS…TTPS. Residues 703–729 are compositionally biased toward basic and acidic residues; sequence QLEKEKQDRLEKARLEKEKAEKEEQEF. Residues 703-847 are a coiled coil; that stretch reads QLEKEKQDRL…ERKHDENDMD (145 aa). Low complexity predominate over residues 744 to 753; the sequence is LLEQQKQQQE. Composition is skewed to basic and acidic residues over residues 754 to 778 and 786 to 853; these read GQER…QRQI and EARI…KLLE. Residues 862–877 show a composition bias toward polar residues; sequence PTITPPQSLHSSQIIR. Residues 880–909 adopt a coiled-coil conformation; it reads IEEDDQTNSELEMFQNEYNRLQDEEEHINS. 2 stretches are compositionally biased toward low complexity: residues 914–936 and 976–1010; these read GSSG…GASS and TTSD…TNNN. A compositionally biased stretch (polar residues) spans 1032 to 1048; that stretch reads TKEQQSIIDKQTGLVSK. Residues 1048 to 1076 adopt a coiled-coil conformation; that stretch reads KQSTNNESNEQQQQQQQQQQLQQQQSSQN. The segment covering 1049–1083 has biased composition (low complexity); the sequence is QSTNNESNEQQQQQQQQQQLQQQQSSQNSTTSIST. Residues 1093-1104 show a composition bias toward basic and acidic residues; sequence NEEKEKESEPHK. In terms of domain architecture, Ras-associating 2 spans 1112–1196; the sequence is GRVVVRICLE…DRFVFKKNDI (85 aa).

This Dictyostelium discoideum (Social amoeba) protein is PH domain-containing protein DDB_G0287875.